The chain runs to 257 residues: DNA repair protein RecO (257 aa).

This sequence belongs to the RecO family.

Functionally, involved in DNA repair and RecF pathway recombination. The protein is DNA repair protein RecO of Streptococcus sanguinis (strain SK36).